The primary structure comprises 594 residues: Zinc finger protein 467 (594 aa).

The segment at 1 to 86 is disordered; it reads MRETLEALNS…PQKAEPAGSV (86 aa). The tract at residues 1–183 is interaction with STAT3; the sequence is MRETLEALNS…TLRLHQRLHR (183 aa). Over residues 31–47 the composition is skewed to polar residues; it reads SNAQEKMSSRGESTLHS. Residues 54–64 show a composition bias toward basic and acidic residues; that stretch reads PGQKEGIHTEQ. Lys-97 is covalently cross-linked (Glycyl lysine isopeptide (Lys-Gly) (interchain with G-Cter in SUMO2)). 12 C2H2-type zinc fingers span residues 160–182, 188–210, 216–238, 244–266, 272–294, 300–322, 355–377, 430–452, 458–480, 486–508, 514–536, and 542–564; these read YGCE…QRLH, CACP…QRSH, FPCS…LRTH, YPCA…QKTH, FPCT…QRIH, YQCT…QRVH, FACS…QSLH, FFCP…RRVH, FACA…SRAH, FACA…QAVH, HACA…QAIH, and FSCP…QRIH. A disordered region spans residues 313-351; that stretch reads QHLVRHQRVHDAASRTRSSPDIPVAPHSPTASLTPSPPG. A Glycyl lysine isopeptide (Lys-Gly) (interchain with G-Cter in SUMO2) cross-link involves residue Lys-368.

It belongs to the krueppel C2H2-type zinc-finger protein family. Interacts with STAT3. Enhances STAT3 activity by keeping it in the nucleus.

It localises to the nucleus. In terms of biological role, transcription factor that promotes adipocyte differentiation and suppresses osteoblast differentiation in the bone marrow. Enhances the osteoclast-supporting ability of stromal cells. Binds with STAT3 the consensus sequence 5'-CTTCTGGGAAGA-3' of the acute phase response element (APRE). Transactivates several promoters including FOS, OSM and PPARG. Recruits a histone deacetylase complex. In Mus musculus (Mouse), this protein is Zinc finger protein 467 (Znf467).